Consider the following 230-residue polypeptide: Orotidine 5'-phosphate decarboxylase (230 aa).

Residues aspartate 10, lysine 32, 59-68 (DLKYHDIPNT), threonine 119, arginine 180, glutamine 189, glycine 209, and arginine 210 contribute to the substrate site. Lysine 61 functions as the Proton donor in the catalytic mechanism.

The protein belongs to the OMP decarboxylase family. Type 1 subfamily. As to quaternary structure, homodimer.

The catalysed reaction is orotidine 5'-phosphate + H(+) = UMP + CO2. The protein operates within pyrimidine metabolism; UMP biosynthesis via de novo pathway; UMP from orotate: step 2/2. Catalyzes the decarboxylation of orotidine 5'-monophosphate (OMP) to uridine 5'-monophosphate (UMP). The protein is Orotidine 5'-phosphate decarboxylase of Haemophilus influenzae (strain PittEE).